We begin with the raw amino-acid sequence, 535 residues long: Probable lipid II flippase MurJ (535 aa).

The next 12 helical transmembrane spans lie at 90–110, 131–151, 159–179, 192–212, 233–253, 274–294, 316–336, 350–370, 388–408, 413–433, 451–471, and 484–504; these read VLFT…PFIV, FATI…MAGM, FAAA…LAYA, DLSW…WVAV, LLVL…NLLI, IYQL…LPEL, FTLF…EPIV, TVVV…FVLI, IFAG…FPSL, IATA…ATLV, LVIA…WLAF, and LTLC…AFGI.

It belongs to the MurJ/MviN family.

It is found in the cell inner membrane. Its pathway is cell wall biogenesis; peptidoglycan biosynthesis. In terms of biological role, involved in peptidoglycan biosynthesis. Transports lipid-linked peptidoglycan precursors from the inner to the outer leaflet of the cytoplasmic membrane. The sequence is that of Probable lipid II flippase MurJ from Rhizobium meliloti (strain 1021) (Ensifer meliloti).